Here is a 143-residue protein sequence, read N- to C-terminus: Large ribosomal subunit protein mL51 (143 aa).

A mitochondrion-targeting transit peptide spans 1–52 (MAALVRGLMRRVAALPQAVRSVSGGGQRHEPYRPLPITSPLAGLPRNFRVRE).

It belongs to the mitochondrion-specific ribosomal protein mL51 family. Component of the mitochondrial ribosome large subunit (39S) which comprises a 16S rRNA and about 50 distinct proteins.

The protein localises to the mitochondrion. The chain is Large ribosomal subunit protein mL51 (MRPL51) from Gallus gallus (Chicken).